The following is a 483-amino-acid chain: PAT complex subunit CCDC47 (483 aa).

The N-terminal stretch at 1–20 (MKAFHTFCVVLLVFGSVSEA) is a signal peptide. The Cytoplasmic segment spans residues 21–135 (KFDDFEDEED…PAHLQNSWES (115 aa)). Positions 46-118 (MEDSVTESPQ…PDTSSSKNKD (73 aa)) are disordered. Residues 60–104 (TEDDEDETTVELEGQDENQEGDFEDADTQEGDTESEPYDDEEFEG) show a composition bias toward acidic residues. Over residues 105–118 (YEDKPDTSSSKNKD) the composition is skewed to basic and acidic residues. A helical membrane pass occupies residues 136–155 (YYLEILMVTGLLAYIMNYII). Topologically, residues 156–483 (GKNKNSRLAQ…KMKQIKVKAM (328 aa)) are lumenal. A glycan (N-linked (GlcNAc...) asparagine) is linked at Asn-178. Residues 424 to 483 (QRQEAAQSRREEKKRAEKERIMNEEDPEKQRRLEEAALRREQKKLEKKQMKMKQIKVKAM) form a disordered region. The segment covering 430 to 472 (QSRREEKKRAEKERIMNEEDPEKQRRLEEAALRREQKKLEKKQ) has biased composition (basic and acidic residues). A coiled-coil region spans residues 450–483 (PEKQRRLEEAALRREQKKLEKKQMKMKQIKVKAM). Residues 473–483 (MKMKQIKVKAM) show a composition bias toward basic residues.

It belongs to the CCDC47 family. As to quaternary structure, component of the PAT complex, composed of WDR83OS/Asterix and CCDC47. The PAT complex is part of the multi-pass translocon (MPT) complex, composed of three subcomplexes, the GEL complex (composed of RAB5IF/OPTI and TMCO1), the BOS complex (composed of NCLN/Nicalin, NOMO and TMEM147) and the PAT complex (composed of WDR83OS/Asterix and CCDC47). The MPT complex associates with the SEC61 complex. Interacts with VCP, HSPA5, DERL1, DERL2 and SELENOS.

It is found in the endoplasmic reticulum membrane. The protein resides in the rough endoplasmic reticulum membrane. In terms of biological role, component of the multi-pass translocon (MPT) complex that mediates insertion of multi-pass membrane proteins into the lipid bilayer of membranes. The MPT complex takes over after the SEC61 complex: following membrane insertion of the first few transmembrane segments of proteins by the SEC61 complex, the MPT complex occludes the lateral gate of the SEC61 complex to promote insertion of subsequent transmembrane regions. Within the MPT complex, the PAT subcomplex sequesters any highly polar regions in the transmembrane domains away from the non-polar membrane environment until they can be buried in the interior of the fully assembled protein. Within the PAT subcomplex, CCDC47 occludes the lateral gate of the SEC61 complex. Involved in the regulation of calcium ion homeostasis in the ER. Required for proper protein degradation via the ERAD (ER-associated degradation) pathway. Has an essential role in the maintenance of ER organization during embryogenesis. The chain is PAT complex subunit CCDC47 from Homo sapiens (Human).